The following is a 245-amino-acid chain: 1-(5-phosphoribosyl)-5-[(5-phosphoribosylamino)methylideneamino] imidazole-4-carboxamide isomerase (245 aa).

The active-site Proton acceptor is aspartate 8. The active-site Proton donor is the aspartate 129.

Belongs to the HisA/HisF family.

The protein resides in the cytoplasm. The enzyme catalyses 1-(5-phospho-beta-D-ribosyl)-5-[(5-phospho-beta-D-ribosylamino)methylideneamino]imidazole-4-carboxamide = 5-[(5-phospho-1-deoxy-D-ribulos-1-ylimino)methylamino]-1-(5-phospho-beta-D-ribosyl)imidazole-4-carboxamide. The protein operates within amino-acid biosynthesis; L-histidine biosynthesis; L-histidine from 5-phospho-alpha-D-ribose 1-diphosphate: step 4/9. The chain is 1-(5-phosphoribosyl)-5-[(5-phosphoribosylamino)methylideneamino] imidazole-4-carboxamide isomerase from Trichlorobacter lovleyi (strain ATCC BAA-1151 / DSM 17278 / SZ) (Geobacter lovleyi).